Reading from the N-terminus, the 1481-residue chain is Cystic fibrosis transmembrane conductance regulator (1481 aa).

The Cytoplasmic portion of the chain corresponds to 1–77 (MQRSPLEKAS…KLINALRRCF (77 aa)). A helical transmembrane segment spans residues 78–98 (FWRFTFYGILLYLGEVTKAVQ). The ABC transmembrane type-1 1 domain occupies 81–365 (FTFYGILLYL…WAVQTWYDSL (285 aa)). Residues 99–122 (PLLLGRIIASYDPDNKTERSIAIY) lie on the Extracellular side of the membrane. The helical transmembrane segment at 123–146 (LGIGLCLLFIVRTLLLHPAIFGLH) threads the bilayer. Residues 147–195 (HIGMQMRIAMFSLIYKKTLKLSSRVLDKISIGQLVSLLSNNLNKFDEGL) are Cytoplasmic-facing. Residues 196 to 216 (ALAHFVWIAPLQVALLMGLIW) traverse the membrane as a helical segment. The Extracellular portion of the chain corresponds to 217–222 (ELLQAS). A helical membrane pass occupies residues 223–243 (AFCGLGFLIVLALFQAGLGRM). Over 244-298 (MMKYRDQRAGKINERLVITSEMIENIQSVKAYCWEEAMEKIIENLRQTELKLTRK) the chain is Cytoplasmic. The chain crosses the membrane as a helical span at residues 299 to 319 (AAYVRYFNSSAFFFSGFFVVF). At 320 to 339 (LSVLPYALIKGIVLRKIFTT) the chain is on the extracellular side. The chain crosses the membrane as a helical span at residues 340-358 (ISFCIVLRMAVTRQFPWAV). Residues 359–858 (QTWYDSLGAI…YLRYITLHKS (500 aa)) lie on the Cytoplasmic side of the membrane. Residues W401, S434, 458 to 465 (GSTGAGKT), and Q493 contribute to the ATP site. Positions 423-646 (NGDDNLFFSN…RPDFSSKLMG (224 aa)) constitute an ABC transporter 1 domain. The S-palmitoyl cysteine moiety is linked to residue C524. Phosphoserine occurs at positions 549 and 660. A disordered R region region spans residues 654 to 831 (SSERRNSILT…EEINEEDLKE (178 aa)). The residue at position 670 (S670) is a Phosphoserine; by PKA. The residue at position 686 (S686) is a Phosphoserine. Residue K688 forms a Glycyl lysine isopeptide (Lys-Gly) (interchain with G-Cter in ubiquitin) linkage. Residues S700 and S712 each carry the phosphoserine modification. T717 carries the phosphothreonine modification. 6 positions are modified to phosphoserine: S737, S753, S768, S790, S795, and S813. The chain crosses the membrane as a helical span at residues 859 to 879 (LIFVLIWCLVIFLAEVAASLV). Residues 859-1155 (LIFVLIWCLV…AVNSSIDVDS (297 aa)) enclose the ABC transmembrane type-1 2 domain. Residues 880–918 (VLWLLGNTPFQDKGNSTYSRNNSYAVIITNTSSYYVFYI) are Extracellular-facing. N894, N900, and N909 each carry an N-linked (GlcNAc...) asparagine glycan. Residues 919-939 (YVGVADTLLALGFFRGLPLVH) traverse the membrane as a discontinuously helical segment. The Cytoplasmic segment spans residues 940 to 990 (TLITVSKMLHHKMLHSVLQAPMSTLNTLKAGGILNRFSKDIAILDDLLPLT). A helical membrane pass occupies residues 991 to 1011 (IFDFIQLLLIVIGAIAVVSVL). Topologically, residues 1012 to 1013 (QP) are extracellular. The chain crosses the membrane as a helical span at residues 1014 to 1034 (YIFLATVPVIAAFILLRAYFL). Residues 1035–1095 (QTSQQLKQLE…TANWFLYLST (61 aa)) are Cytoplasmic-facing. The chain crosses the membrane as a helical span at residues 1096-1116 (LRWFQMRIEMIFVIFFIAVTF). At 1117 to 1130 (ISILTTGEGEGTVG) the chain is on the extracellular side. A helical transmembrane segment spans residues 1131-1151 (IILTLAMNIMSTLQWAVNSSI). Topologically, residues 1152–1481 (DVDSLMRSVS…TEEEVQETRL (330 aa)) are cytoplasmic. One can recognise an ABC transporter 2 domain in the interval 1211–1444 (MTIKDLTAKY…KSLFRQAISH (234 aa)). Residues Y1220 and 1245–1252 (GRTGSGKS) contribute to the ATP site. Residues 1387–1481 (RALKQAFADC…TEEEVQETRL (95 aa)) are interaction with GORASP2. A lipid anchor (S-palmitoyl cysteine) is attached at C1396. Phosphoserine is present on residues S1445 and S1457. Positions 1453–1481 (HRNSSKYKSQPQIASLKEETEEEVQETRL) are disordered. The span at 1471 to 1481 (ETEEEVQETRL) shows a compositional bias: acidic residues. The PDZ-binding signature appears at 1479 to 1481 (TRL).

This sequence belongs to the ABC transporter superfamily. ABCC family. CFTR transporter (TC 3.A.1.202) subfamily. As to quaternary structure, monomer; does not require oligomerization for channel activity. May form oligomers in the membrane. Interacts with SLC26A3, SLC26A6 and NHERF1. Interacts with SHANK2. Interacts with MYO6. Interacts (via C-terminus) with GOPC (via PDZ domain); this promotes CFTR internalization and thereby decreases channel activity. Interacts with SLC4A7 through NHERF1. Found in a complex with MYO5B and RAB11A. Interacts with ANO1. Interacts with SLC26A8. Interacts with AHCYL1; the interaction increases CFTR activity. Interacts with CSE1L. The core-glycosylated form interacts with GORASP2 (via PDZ GRASP-type 1 domain) in respone to ER stress. Interacts with MARCHF2; the interaction leads to CFTR ubiqtuitination and degradation. Interacts with ADGRG2. Post-translationally, N-glycosylated. In terms of processing, phosphorylated; cAMP treatment promotes phosphorylation and activates the channel. Dephosphorylation decreases the ATPase activity (in vitro). Phosphorylation at PKA sites activates the channel. Phosphorylation at PKC sites enhances the response to phosphorylation by PKA. Phosphorylated by AMPK; this inhibits channel activity. Ubiquitinated, leading to its degradation in the lysosome. Deubiquitination by USP10 in early endosomes enhances its endocytic recycling to the cell membrane. Ubiquitinated by RNF185 during ER stress. Ubiquitinated by MARCHF2.

Its subcellular location is the apical cell membrane. The protein localises to the early endosome membrane. It is found in the cell membrane. It localises to the recycling endosome membrane. The protein resides in the endoplasmic reticulum membrane. Its subcellular location is the nucleus. The enzyme catalyses ATP + H2O + closed Cl(-) channel = ADP + phosphate + open Cl(-) channel.. It catalyses the reaction chloride(in) = chloride(out). The catalysed reaction is hydrogencarbonate(in) = hydrogencarbonate(out). It carries out the reaction ATP + H2O = ADP + phosphate + H(+). Functionally, epithelial ion channel that plays an important role in the regulation of epithelial ion and water transport and fluid homeostasis. Mediates the transport of chloride ions across the cell membrane. Possesses an intrinsic ATPase activity and utilizes ATP to gate its channel; the passive flow of anions through the channel is gated by cycles of ATP binding and hydrolysis by the ATP-binding domains. The ion channel is also permeable to HCO(3)(-); selectivity depends on the extracellular chloride concentration. Exerts its function also by modulating the activity of other ion channels and transporters. Contributes to the regulation of the pH and the ion content of the epithelial fluid layer. Modulates the activity of the epithelial sodium channel (ENaC) complex, in part by regulating the cell surface expression of the ENaC complex. May regulate bicarbonate secretion and salvage in epithelial cells by regulating the transporter SLC4A7. Can inhibit the chloride channel activity of ANO1. Plays a role in the chloride and bicarbonate homeostasis during sperm epididymal maturation and capacitation. The polypeptide is Cystic fibrosis transmembrane conductance regulator (Aotus nancymaae (Ma's night monkey)).